We begin with the raw amino-acid sequence, 417 residues long: Equilibrative nucleotide transporter 2 (417 aa).

11 helical membrane-spanning segments follow: residues 20–40, 52–72, 85–105, 109–129, 144–164, 185–205, 265–285, 292–312, 328–348, 354–374, and 393–413; these read AVCWLLGVGCLLAWNSMLTIV, PSRILTIIYQSFSIGALSVLV, LFGYSLFSLGSLAVLVLNLAT, GGIGSFIGVCVISAAFGLADA, PEFLQSFLAGLAASGALTSGL, LFFAMSASFELVCVLLYAYVF, LAVTLFLVYLLTFSIFPGFLS, SLGDWYALVLIAVFNVSDLVG, CLLITSLGRLLLIPAFNITGI, WMIFLMSVLGLSNGYLTVCVI, and LVLYICGGMFAGVACDWLWLV.

This sequence belongs to the SLC29A/ENT transporter (TC 2.A.57) family. As to expression, expressed in leaves and flowers.

Its subcellular location is the cell membrane. In terms of biological role, may be involved in nucleoside transport. The chain is Equilibrative nucleotide transporter 2 (ENT2) from Arabidopsis thaliana (Mouse-ear cress).